Reading from the N-terminus, the 72-residue chain is Cytochrome c oxidase subunit 8C, mitochondrial (72 aa).

The transit peptide at 1-29 (MSRLLQFCSSLLRHRVVLFSKPGHSGRLS) directs the protein to the mitochondrion. Topologically, residues 30 to 40 (HSESPQNQVLT) are mitochondrial matrix. A helical membrane pass occupies residues 41 to 64 (PTESVVGIVVFFATFFIPAAYVMS). Residues 65–72 (NLKFFKGE) are Mitochondrial intermembrane-facing.

It belongs to the cytochrome c oxidase VIII family. As to quaternary structure, component of the cytochrome c oxidase (complex IV, CIV), a multisubunit enzyme composed of 14 subunits. The complex is composed of a catalytic core of 3 subunits MT-CO1, MT-CO2 and MT-CO3, encoded in the mitochondrial DNA, and 11 supernumerary subunits COX4I, COX5A, COX5B, COX6A, COX6B, COX6C, COX7A, COX7B, COX7C, COX8 and NDUFA4, which are encoded in the nuclear genome. The complex exists as a monomer or a dimer and forms supercomplexes (SCs) in the inner mitochondrial membrane with NADH-ubiquinone oxidoreductase (complex I, CI) and ubiquinol-cytochrome c oxidoreductase (cytochrome b-c1 complex, complex III, CIII), resulting in different assemblies (supercomplex SCI(1)III(2)IV(1) and megacomplex MCI(2)III(2)IV(2)).

The protein localises to the mitochondrion inner membrane. The protein operates within energy metabolism; oxidative phosphorylation. Component of the cytochrome c oxidase, the last enzyme in the mitochondrial electron transport chain which drives oxidative phosphorylation. The respiratory chain contains 3 multisubunit complexes succinate dehydrogenase (complex II, CII), ubiquinol-cytochrome c oxidoreductase (cytochrome b-c1 complex, complex III, CIII) and cytochrome c oxidase (complex IV, CIV), that cooperate to transfer electrons derived from NADH and succinate to molecular oxygen, creating an electrochemical gradient over the inner membrane that drives transmembrane transport and the ATP synthase. Cytochrome c oxidase is the component of the respiratory chain that catalyzes the reduction of oxygen to water. Electrons originating from reduced cytochrome c in the intermembrane space (IMS) are transferred via the dinuclear copper A center (CU(A)) of subunit 2 and heme A of subunit 1 to the active site in subunit 1, a binuclear center (BNC) formed by heme A3 and copper B (CU(B)). The BNC reduces molecular oxygen to 2 water molecules using 4 electrons from cytochrome c in the IMS and 4 protons from the mitochondrial matrix. The chain is Cytochrome c oxidase subunit 8C, mitochondrial (Cox8c) from Rattus norvegicus (Rat).